Consider the following 400-residue polypeptide: Large envelope protein (400 aa).

The residue at position 1 (Met-1) is an N-acetylmethionine. Disordered regions lie at residues 1–54 (MGGW…HWPE) and 85–116 (LTTV…RDSH). The N-myristoyl glycine; by host moiety is linked to residue Gly-2. A pre-S1 region spans residues 2–119 (GGWSSKPRQG…PPLRDSHPQA (118 aa)). Positions 2 to 174 (GGWSSKPRQG…FSRTGDPAPN (173 aa)) are pre-S. Over 2–181 (GGWSSKPRQG…APNMENTTSG (180 aa)) the chain is Virion surface; in external conformation. Residues 2–253 (GGWSSKPRQG…PGYRWMCLRR (252 aa)) are Intravirion; in internal conformation-facing. Trp-4 carries N-linked (GlcNAc...) asparagine glycosylation. Positions 96-106 (STNRQSGRQPT) are enriched in polar residues. A pre-S2 region spans residues 120 to 174 (MQWNSTTFHQALLDPRVRGLYFPAGGSSSGTVNPVPTTASPISSIFSRTGDPAPN). A helical membrane pass occupies residues 182–202 (FLGPLLVLQAGFFLLTRILTI). The Intravirion; in external conformation segment spans residues 203 to 253 (PQSLDSWWTSLNFLGGAPTCPGQNSQSPTSNHSPTSCPPICPGYRWMCLRR). The chain crosses the membrane as a helical span at residues 254-274 (FIIFLFILLLCLIFLLVLLDY). Topologically, residues 275-348 (QGMLPVCPLL…WASVRFSWLS (74 aa)) are virion surface. Asn-320 is a glycosylation site (N-linked (GlcNAc...) asparagine; by host). A helical membrane pass occupies residues 349 to 369 (LLVPFVQWFAGLSPTVWLSVI). Over 370-375 (WMMWYW) the chain is Intravirion. Residues 376–398 (GPSLYNILSPFLPLLPIFFCLWV) form a helical membrane-spanning segment. Residues 399 to 400 (YI) lie on the Virion surface side of the membrane.

This sequence belongs to the orthohepadnavirus major surface antigen family. As to quaternary structure, in its internal form (Li-HBsAg), interacts with the capsid protein and with the isoform S. Interacts with host chaperone CANX. Associates with host chaperone CANX through its pre-S2 N glycan; this association may be essential for isoform M proper secretion. In terms of assembly, interacts with isoform L. Interacts with the antigens of satellite virus HDV (HDVAgs); this interaction is required for encapsidation of HDV genomic RNA. In terms of processing, isoform M is N-terminally acetylated by host at a ratio of 90%, and N-glycosylated by host at the pre-S2 region. Myristoylated.

The protein localises to the virion membrane. In terms of biological role, the large envelope protein exists in two topological conformations, one which is termed 'external' or Le-HBsAg and the other 'internal' or Li-HBsAg. In its external conformation the protein attaches the virus to cell receptors and thereby initiating infection. This interaction determines the species specificity and liver tropism. This attachment induces virion internalization predominantly through caveolin-mediated endocytosis. The large envelope protein also assures fusion between virion membrane and endosomal membrane. In its internal conformation the protein plays a role in virion morphogenesis and mediates the contact with the nucleocapsid like a matrix protein. The middle envelope protein plays an important role in the budding of the virion. It is involved in the induction of budding in a nucleocapsid independent way. In this process the majority of envelope proteins bud to form subviral lipoprotein particles of 22 nm of diameter that do not contain a nucleocapsid. The protein is Large envelope protein of Homo sapiens (Human).